Here is a 280-residue protein sequence, read N- to C-terminus: Meiotic spindle formation protein 2 (280 aa).

Residues 1–104 (MSGLDDRKKL…LPKSSPESSV (104 aa)) form a disordered region. Residues 72-92 (LHSESKKELSRNPVSRGEEHS) show a composition bias toward basic and acidic residues. Positions 93–104 (SSLPKSSPESSV) are enriched in low complexity.

Interacts with mei-1.

Its subcellular location is the cytoplasm. The protein resides in the cytoskeleton. The protein localises to the spindle pole. In terms of biological role, forms a heterodimeric complex in conjunction with mei-1 which severs microtubules in vitro in an ATP-dependent manner. This activity may promote rapid reorganization of cellular microtubule arrays. May act to target mei-1 within the cell. Required specifically for meiotic spindle formation in the female germline. The protein is Meiotic spindle formation protein 2 (mei-2) of Caenorhabditis elegans.